A 916-amino-acid chain; its full sequence is Cadherin-4 (916 aa).

The first 20 residues, 1 to 20 (MTAGAGVLLLLLSLSGALRA), serve as a signal peptide directing secretion. Positions 21 to 169 (HNEDLTTRET…NANGLRRRKR (149 aa)) are excised as a propeptide. The segment at 124–168 (TSSPHSGHKPQKGKKVVALDPSPPPKDTLLPWPQHQNANGLRRRK) is disordered. Positions 129–138 (SGHKPQKGKK) are enriched in basic residues. Cadherin domains lie at 170–277 (DWVI…RPEF), 278–392 (INQV…PPEF), 393–507 (TAST…APYF), 508–613 (PSNH…DNAP), and 614–724 (ELLP…TIGA). The Extracellular portion of the chain corresponds to 170-734 (DWVIPPINVP…VAAAGLGTGA (565 aa)). 6 N-linked (GlcNAc...) asparagine glycosylation sites follow: N283, N412, N557, N632, N661, and N702. Residues 735–756 (IVAILICILILLTMVLLFVMWM) traverse the membrane as a helical segment. Residues 757–916 (KRREKERHTK…ADMYGGGEED (160 aa)) lie on the Cytoplasmic side of the membrane. The interval 806 to 838 (MGHVPSKAPGVRRVDERPVGAEPQYPIRPMVPH) is disordered.

As to expression, expressed mainly in brain but also found in other tissues.

It is found in the cell membrane. Its function is as follows. Cadherins are calcium-dependent cell adhesion proteins. They preferentially interact with themselves in a homophilic manner in connecting cells; cadherins may thus contribute to the sorting of heterogeneous cell types. May play an important role in retinal development. The sequence is that of Cadherin-4 (CDH4) from Homo sapiens (Human).